Reading from the N-terminus, the 87-residue chain is Putative regulatory protein syc0519_c (87 aa).

The protein belongs to the RemA family.

This Synechococcus sp. (strain ATCC 27144 / PCC 6301 / SAUG 1402/1) (Anacystis nidulans) protein is Putative regulatory protein syc0519_c.